The sequence spans 125 residues: S-adenosylmethionine decarboxylase proenzyme (125 aa).

The Schiff-base intermediate with substrate; via pyruvic acid role is filled by Ser61. Ser61 carries the pyruvic acid (Ser); by autocatalysis modification. The Proton acceptor; for processing activity role is filled by His66. Cys81 functions as the Proton donor; for catalytic activity in the catalytic mechanism.

It belongs to the prokaryotic AdoMetDC family. Type 1 subfamily. In terms of assembly, heterotetramer of two alpha and two beta chains arranged as a dimer of alpha/beta heterodimers. It depends on pyruvate as a cofactor. In terms of processing, is synthesized initially as an inactive proenzyme. Formation of the active enzyme involves a self-maturation process in which the active site pyruvoyl group is generated from an internal serine residue via an autocatalytic post-translational modification. Two non-identical subunits are generated from the proenzyme in this reaction, and the pyruvate is formed at the N-terminus of the alpha chain, which is derived from the carboxyl end of the proenzyme. The post-translation cleavage follows an unusual pathway, termed non-hydrolytic serinolysis, in which the side chain hydroxyl group of the serine supplies its oxygen atom to form the C-terminus of the beta chain, while the remainder of the serine residue undergoes an oxidative deamination to produce ammonia and the pyruvoyl group blocking the N-terminus of the alpha chain.

It carries out the reaction S-adenosyl-L-methionine + H(+) = S-adenosyl 3-(methylsulfanyl)propylamine + CO2. The protein operates within amine and polyamine biosynthesis; S-adenosylmethioninamine biosynthesis; S-adenosylmethioninamine from S-adenosyl-L-methionine: step 1/1. In terms of biological role, catalyzes the decarboxylation of S-adenosylmethionine to S-adenosylmethioninamine (dcAdoMet), the propylamine donor required for the synthesis of the polyamines spermine and spermidine from the diamine putrescine. In Prochlorococcus marinus (strain MIT 9313), this protein is S-adenosylmethionine decarboxylase proenzyme.